A 265-amino-acid polypeptide reads, in one-letter code: 14-3-3-like protein GF14 nu (265 aa).

Phosphoserine occurs at positions 67, 109, and 190. T211 is subject to Phosphothreonine. The interval 242–265 (AGGDEIKEASKHEPEEGKPAETGQ) is disordered. Basic and acidic residues predominate over residues 245-265 (DEIKEASKHEPEEGKPAETGQ).

It belongs to the 14-3-3 family. In terms of assembly, component of the SERK1 signaling complex, composed of KAPP, CDC48A, GRF6 or GRF7, SERK1, SERK2, SERK3/BAK1 and BRI1. Interacts with DREB1A and DREB1B in the nucleus. Interacts with CINV1.

It localises to the nucleus. The protein resides in the cytoplasm. Is associated with a DNA binding complex that binds to the G box, a well-characterized cis-acting DNA regulatory element found in plant genes. This chain is 14-3-3-like protein GF14 nu (GRF7), found in Arabidopsis thaliana (Mouse-ear cress).